The primary structure comprises 237 residues: Phosphoribosylaminoimidazole-succinocarboxamide synthase (237 aa).

Belongs to the SAICAR synthetase family.

It catalyses the reaction 5-amino-1-(5-phospho-D-ribosyl)imidazole-4-carboxylate + L-aspartate + ATP = (2S)-2-[5-amino-1-(5-phospho-beta-D-ribosyl)imidazole-4-carboxamido]succinate + ADP + phosphate + 2 H(+). It functions in the pathway purine metabolism; IMP biosynthesis via de novo pathway; 5-amino-1-(5-phospho-D-ribosyl)imidazole-4-carboxamide from 5-amino-1-(5-phospho-D-ribosyl)imidazole-4-carboxylate: step 1/2. This is Phosphoribosylaminoimidazole-succinocarboxamide synthase from Enterobacter sp. (strain 638).